A 432-amino-acid polypeptide reads, in one-letter code: MADIIIKNAYVLTMDPDAGDIKKGTVVIEDGKITEIGVKTKESADTVIDAKGSVVMPGLVNTHTHAAMTLFRGYADDLQLAEWLEKHIWPAEAQLTAEDVYRGSLLACLEMIRSGTTSFADMYFFMDETAKAVEASGLRASLSHGLIELWNEEKGENDLKEGKRFVRAWQGAAKGRIKTMYGPHAPNTCSDEFLAKVKEAARQDGAGLHIHVLETEAELLAMKERYGKCSVHMLDDIGFFGPDVLAAHCVWLSDGDIEVLREKGVNVSHNPISNMKLASGTAPVYKMLERGVNVSLGTDGCASNNNLDLFEEMKTAALLHKLSTCNPTALPARQVLQMATVNGAKALGTETGMLKTGMKADMIIVDMKKPHLTPCFDVPSHLVYSAGGSDVRTTIVDGKILMQDYRVMVLDEQKVIEEAQKAAEELVARVNS.

His63 and His65 together coordinate Zn(2+). Substrate-binding residues include Glu92 and His184. His211 lines the Zn(2+) pocket. The substrate site is built by Glu214 and Asp299. Asp299 contributes to the Zn(2+) binding site.

This sequence belongs to the metallo-dependent hydrolases superfamily. MTA/SAH deaminase family. Homotetramer. The cofactor is Zn(2+).

The enzyme catalyses 5'-deoxyadenosine + H2O + H(+) = 5'-deoxyinosine + NH4(+). The catalysed reaction is S-adenosyl-L-homocysteine + H2O + H(+) = S-inosyl-L-homocysteine + NH4(+). It catalyses the reaction S-methyl-5'-thioadenosine + H2O + H(+) = S-methyl-5'-thioinosine + NH4(+). It carries out the reaction adenosine + H2O + H(+) = inosine + NH4(+). It participates in amino-acid biosynthesis; S-adenosyl-L-methionine biosynthesis. Functionally, catalyzes the deamination of three SAM-derived enzymatic products, namely 5'-deoxyadenosine, S-adenosyl-L-homocysteine, and 5'-methylthioadenosine, to produce the inosine analogs. Can also deaminate adenosine. The preferred substrate for this enzyme is 5'-deoxyadenosine, but all these substrates are efficiently deaminated. Likely functions in a S-adenosyl-L-methionine (SAM) recycling pathway from S-adenosyl-L-homocysteine (SAH) produced from SAM-dependent methylation reactions. May also be involved in the recycling of 5'-deoxyadenosine, whereupon the 5'-deoxyribose moiety of 5'-deoxyinosine is further metabolized to deoxyhexoses used for the biosynthesis of aromatic amino acids in methanogens. The polypeptide is 5'-deoxyadenosine deaminase (Methanosarcina mazei (strain ATCC BAA-159 / DSM 3647 / Goe1 / Go1 / JCM 11833 / OCM 88) (Methanosarcina frisia)).